Here is a 187-residue protein sequence, read N- to C-terminus: Imidazoleglycerol-phosphate dehydratase (187 aa).

The protein belongs to the imidazoleglycerol-phosphate dehydratase family.

Its subcellular location is the cytoplasm. The enzyme catalyses D-erythro-1-(imidazol-4-yl)glycerol 3-phosphate = 3-(imidazol-4-yl)-2-oxopropyl phosphate + H2O. It functions in the pathway amino-acid biosynthesis; L-histidine biosynthesis; L-histidine from 5-phospho-alpha-D-ribose 1-diphosphate: step 6/9. This is Imidazoleglycerol-phosphate dehydratase from Pyrobaculum calidifontis (strain DSM 21063 / JCM 11548 / VA1).